The following is a 267-amino-acid chain: Integral membrane protein 2C (267 aa).

At threonine 37 the chain carries Phosphothreonine. Residues 55–75 (VGGVCYLSMGMVVLLMGLVFA) traverse the membrane as a helical; Signal-anchor for type II membrane protein segment. Residues 136–230 (FGGGDPADII…LCNGKDTYRL (95 aa)) enclose the BRICHOS domain. A disulfide bridge connects residues cysteine 163 and cysteine 222. An N-linked (GlcNAc...) asparagine glycan is attached at asparagine 169.

This sequence belongs to the ITM2 family. Interacts with BACE1. Interacts with APP. Interacts with STMN2. Type I membrane-bound, as well as soluble, furin has a pre-eminent role in ITM2C proteolytic processing. PCSK7 and PCSK5 may also be involved although to a lesser extent. The soluble form of PCSK7 is incapable of processing ITM2C. Fails to undergo shedding by ADAM10 and intramembrane cleavage by SPPL2B. High levels in the brain, specifically in the cerebral cortex, medulla, amygdala, hippocampus, thalamus, caudate nucleus, cerebellum, olfactory lobe and spinal cord. Very low levels in other organs.

The protein localises to the lysosome membrane. It localises to the cell membrane. In terms of biological role, negative regulator of amyloid-beta peptide production. May inhibit the processing of APP by blocking its access to alpha- and beta-secretase. Binding to the beta-secretase-cleaved APP C-terminal fragment is negligible, suggesting that ITM2C is a poor gamma-secretase cleavage inhibitor. May play a role in TNF-induced cell death and neuronal differentiation. The polypeptide is Integral membrane protein 2C (ITM2C) (Homo sapiens (Human)).